The following is a 109-amino-acid chain: MIDISHGHTSCSSHRSSSLPSVFWKIHLSPPLPSFKFKKSTESTQRQTIPKFSSPASSLAPSTPLWSLSSCLLVSEVSFWPGAGFLYNDLVCLDREDHCLSNSASHSCG.

This is an uncharacterized protein from Saccharomyces cerevisiae (strain ATCC 204508 / S288c) (Baker's yeast).